The primary structure comprises 448 residues: Trigger factor (448 aa).

The region spanning 173 to 258 is the PPIase FKBP-type domain; it reads SDRVTIDFVG…LKQIEWAHMP (86 aa).

The protein belongs to the FKBP-type PPIase family. Tig subfamily.

It is found in the cytoplasm. It catalyses the reaction [protein]-peptidylproline (omega=180) = [protein]-peptidylproline (omega=0). Functionally, involved in protein export. Acts as a chaperone by maintaining the newly synthesized protein in an open conformation. Functions as a peptidyl-prolyl cis-trans isomerase. The polypeptide is Trigger factor (Herminiimonas arsenicoxydans).